The following is a 305-amino-acid chain: 2-aminophenol 1,6-dioxygenase beta subunit (305 aa).

Positions 14, 63, and 196 each coordinate Fe cation.

Belongs to the LigB/MhpB extradiol dioxygenase family. As to quaternary structure, heterotetramer of 2 alpha and 2 beta subunits. The cofactor is Fe(2+).

The catalysed reaction is 2-aminophenol + O2 = 2-aminomuconate 6-semialdehyde. Its activity is regulated as follows. Strongly inhibited by CuSO(4), FeCl(3), K(3)[Fe(CN)(6)], AgNO3, HgCl(2) and MnCl(2). Component of the 2-aminophenol 1,6-dioxygenase complex that catalyzes the ring fission of 2-aminophenol to produce 2-aminomuconic 6-semialdehyde. AmnB seems to be the catalytic subunit of the complex. The enzyme is also active toward 2-amino-p-cresol, 6-amino-m-cresol, 2-amino-m-cresol, 2-amino-4,5-dimethylphenol, 2-amino-4-chlorophenol, and catechol. This is 2-aminophenol 1,6-dioxygenase beta subunit (amnB) from Pseudomonas sp.